The following is a 261-amino-acid chain: Acetylglutamate kinase (261 aa).

Substrate-binding positions include 48–49 (GG), Arg-70, and Asn-164.

This sequence belongs to the acetylglutamate kinase family. ArgB subfamily.

It localises to the cytoplasm. It catalyses the reaction N-acetyl-L-glutamate + ATP = N-acetyl-L-glutamyl 5-phosphate + ADP. It participates in amino-acid biosynthesis; L-arginine biosynthesis; N(2)-acetyl-L-ornithine from L-glutamate: step 2/4. Catalyzes the ATP-dependent phosphorylation of N-acetyl-L-glutamate. The polypeptide is Acetylglutamate kinase (Roseiflexus sp. (strain RS-1)).